A 239-amino-acid polypeptide reads, in one-letter code: Small ribosomal subunit protein uS2 (239 aa).

It belongs to the universal ribosomal protein uS2 family.

The chain is Small ribosomal subunit protein uS2 from Parasynechococcus marenigrum (strain WH8102).